A 458-amino-acid chain; its full sequence is MPN domain-containing protein (458 aa).

Residues 1–37 form a disordered region; sequence MGSEPPSSPQVVEEGADEEDEELSGAEDADLRSSSGR. Acidic residues predominate over residues 14–28; it reads EGADEEDEELSGAED. Residues 42–137 form the RAMA domain; that stretch reads TRRGITLRVL…QYKTTWLHKY (96 aa). Serine 94, serine 96, and tryptophan 116 together coordinate DNA. The segment at 147–175 is disordered; that stretch reads SEGEDDEMGDDDEEEGKTTIPVEDKNKKS. Acidic residues predominate over residues 148-161; the sequence is EGEDDEMGDDDEEE. The MPN domain maps to 229–364; it reads VAVSSNVLLL…VASTITPFWV (136 aa). Zn(2+) contacts are provided by histidine 306, histidine 308, and aspartate 319. Residues 306–319 carry the JAMM motif motif; the sequence is HSHPRGPALPSLQD.

This sequence belongs to the peptidase M67 family. In terms of processing, degraded following binding to N(6)-methyladenosine methylated DNA (m6A).

Probable protease. Acts as a sensor of N(6)-methyladenosine methylation on DNA (m6A): recognizes and binds m6A DNA, leading to its degradation. Binds only double strand DNA (dsDNA) in a sequence-independent manner. This is MPN domain-containing protein from Danio rerio (Zebrafish).